Here is a 476-residue protein sequence, read N- to C-terminus: WD repeat, SAM and U-box domain-containing protein 1 (476 aa).

7 WD repeats span residues 10 to 47 (DHSDDVNCCAFSSSCLATCSLDKTIRIYSLNDFTELPY), 52 to 91 (GHTYAVHCCCFSPSGHTLASCSTDGATIIWDTSDGRMLAV), 95 to 134 (PTGSPVRVCRFSPESTYLVSGAADGSVVLWNVHSMKFYRS), 137 to 176 (VKDGSLVACAFSPGGNFFVTGSSCGDLTVWDDKMRCLCNE), 178 to 227 (AHDL…FLGG), 237 to 276 (GHSAPVLTCAFSYDGQMLVSGSVDKCVIIYETNTGNILHT), and 279 to 318 (QHTRYVTTCAFAPCSLFLATGSMDKTVHIWKLDNKQPCAG). The SAM domain maps to 333-396 (WSEDDVSAWL…LQKIEELRMK (64 aa)). Positions 403–476 (AVPDEFLCPI…ISRWLETQQK (74 aa)) constitute a U-box domain.

The sequence is that of WD repeat, SAM and U-box domain-containing protein 1 (WDSUB1) from Gallus gallus (Chicken).